Consider the following 578-residue polypeptide: Probable multidrug ABC transporter ATP-binding protein YbhF (578 aa).

2 consecutive ABC transporter domains span residues 6–237 (ITLN…LMTS) and 330–559 (IEAK…PDPT). ATP-binding positions include 40–47 (GPDGAGKT) and 362–369 (GPNGAGKS).

It belongs to the ABC transporter superfamily. As to quaternary structure, the complex is probably composed of two ATP-binding proteins (YbhF) and two transmembrane proteins (YbhR and YbhS).

Part of the ABC transporter complex YbhFSR that could be involved in efflux of cefoperazone. Probably responsible for energy coupling to the transport system. The chain is Probable multidrug ABC transporter ATP-binding protein YbhF (ybhF) from Escherichia coli (strain K12).